The sequence spans 266 residues: Potassium/proton antiporter CemA (266 aa).

Helical transmembrane passes span 46 to 66, 151 to 171, and 226 to 246; these read VIVSVRCLITLIFVPLFINIL, FLSFLSLSVVFLLLKPQIIIL, and FMSLFVATFPVFLDTVFKYWI.

The protein belongs to the CemA family.

It is found in the plastid. The protein resides in the chloroplast inner membrane. It carries out the reaction K(+)(in) + H(+)(out) = K(+)(out) + H(+)(in). In terms of biological role, contributes to K(+)/H(+) antiport activity by supporting proton efflux to control proton extrusion and homeostasis in chloroplasts in a light-dependent manner to modulate photosynthesis. Prevents excessive induction of non-photochemical quenching (NPQ) under continuous-light conditions. Indirectly promotes efficient inorganic carbon uptake into chloroplasts. The chain is Potassium/proton antiporter CemA from Chlorella vulgaris (Green alga).